A 269-amino-acid chain; its full sequence is GTP cyclohydrolase FolE2 (269 aa).

This sequence belongs to the GTP cyclohydrolase IV family.

It catalyses the reaction GTP + H2O = 7,8-dihydroneopterin 3'-triphosphate + formate + H(+). The protein operates within cofactor biosynthesis; 7,8-dihydroneopterin triphosphate biosynthesis; 7,8-dihydroneopterin triphosphate from GTP: step 1/1. Converts GTP to 7,8-dihydroneopterin triphosphate. The polypeptide is GTP cyclohydrolase FolE2 (Azoarcus sp. (strain BH72)).